The following is a 373-amino-acid chain: Chloroperoxidase (373 aa).

The signal sequence occupies residues Met-1–Arg-20. Residue Gln-21 is modified to Pyrrolidone carboxylic acid. Asn-33 carries N-linked (GlcNAc...) asparagine glycosylation. Residue Cys-50 participates in heme binding. Cys-100 and Cys-108 are oxidised to a cystine. The N-linked (GlcNAc...) asparagine glycan is linked to Asn-114. The Mn(2+) site is built by Glu-125, His-126, and Ser-129. Glu-204 is an active-site residue. An N-linked (GlcNAc...) asparagine glycan is attached at Asn-237. O-linked (Man) threonine glycosylation occurs at Thr-259. O-linked (Man) serine glycans are attached at residues Ser-260, Ser-262, Ser-263, and Ser-269. Thr-271 carries an O-linked (Man) threonine glycan. O-linked (Man) serine glycosylation is present at Ser-272. Residue Thr-273 is glycosylated (O-linked (Man) threonine). Residues Thr-296, Thr-304, and Thr-314 are each glycosylated (O-linked (Man...) threonine). The propeptide occupies Glu-322–Leu-373.

Belongs to the chloroperoxidase family. Heme b is required as a cofactor. It depends on Mn(2+) as a cofactor. N- and O-glycosylated.

It catalyses the reaction RH + Cl(-) + H2O2 = RCl + 2 H2O.. Functionally, catalyzes peroxidative halogenations involved in the biosynthesis of clardariomycin (2,2-dichloro-1,3-cyclo-pentenedione). The enzyme also has potent catalase activity and in the absence of halide ion, acts as a peroxidase similar to plant peroxidases. This Leptoxyphium fumago (Caldariomyces fumago) protein is Chloroperoxidase (CPO).